The chain runs to 394 residues: MVVFSKVTAAVFGLATIASAAPAPPTRKGFTVQQQARPAQKKQVNLPAMYAHALTKFGGSVPESVKVAASKGSAVTTPEAGDVEYLTPVNVGGTVMNLDFDTGSADLWVFSGELPASETSGHSVYKPGRTASKLPGGSWQISYGDGSSASGDVYKDTVVVGGVTAHGQAVEAAAQISSQFLQDKNNDGLLGLAFSSLNTVQPQPQTTFFDTVKSSLDRPLFAVTLKHNAPGSFDFGYIDHSKYTGEIAYTDVDNSQGFWSFTADGYSIGGGQSSGSSISGIADTGTTLLLLDDNVVSDFYQHVEGAQNSDEYGGYVFPCSAKVPSFTTIIGGYKAVTPGKLINYGPVTDGSSTCYGGIQSSGGVGQNIFGDIFLKSQFVVFDSEGPRLGFAAQA.

The N-terminal stretch at 1–20 is a signal peptide; the sequence is MVVFSKVTAAVFGLATIASA. A propeptide spans 21-69 (activation peptide); the sequence is APAPPTRKGFTVQQQARPAQKKQVNLPAMYAHALTKFGGSVPESVKVAA. The Peptidase A1 domain occupies 85–391; that stretch reads YLTPVNVGGT…DSEGPRLGFA (307 aa). Active-site residues include D101 and D283. A disulfide bond links C319 and C354.

The protein belongs to the peptidase A1 family. In terms of assembly, monomer.

It is found in the secreted. The catalysed reaction is Hydrolysis of proteins with broad specificity. Generally favors hydrophobic residues in P1 and P1', but also accepts Lys in P1, which leads to activation of trypsinogen. Does not clot milk.. Functionally, secreted aspartic endopeptidase that allows assimilation of proteinaceous substrates. The scissile peptide bond is attacked by a nucleophilic water molecule activated by two aspartic residues in the active site. Shows a broad primary substrate specificity. Favors hydrophobic residues at the P1 and P1' positions, but also accepts a lysine residue in the P1 position, leading to the activation of trypsinogen and chymotrypsinogen A. The polypeptide is Aspergillopepsin-1 (pepA) (Aspergillus clavatus (strain ATCC 1007 / CBS 513.65 / DSM 816 / NCTC 3887 / NRRL 1 / QM 1276 / 107)).